A 204-amino-acid polypeptide reads, in one-letter code: Altered inheritance of mitochondria protein 20 (204 aa).

The chain crosses the membrane as a helical span at residues 6–26 (VAVGTAVGIPIAVGVIIALIF).

The protein belongs to the SKG1 family.

It localises to the vacuole membrane. Functionally, involved in cell cycle progression and surviving DNA damage. This chain is Altered inheritance of mitochondria protein 20 (AIM20), found in Saccharomyces cerevisiae (strain JAY291) (Baker's yeast).